Reading from the N-terminus, the 510-residue chain is Histidine ammonia-lyase (510 aa).

Positions 143 to 145 (ASG) form a cross-link, 5-imidazolinone (Ala-Gly). The residue at position 144 (serine 144) is a 2,3-didehydroalanine (Ser).

This sequence belongs to the PAL/histidase family. In terms of processing, contains an active site 4-methylidene-imidazol-5-one (MIO), which is formed autocatalytically by cyclization and dehydration of residues Ala-Ser-Gly.

Its subcellular location is the cytoplasm. It catalyses the reaction L-histidine = trans-urocanate + NH4(+). It functions in the pathway amino-acid degradation; L-histidine degradation into L-glutamate; N-formimidoyl-L-glutamate from L-histidine: step 1/3. The protein is Histidine ammonia-lyase of Yersinia pseudotuberculosis serotype I (strain IP32953).